Consider the following 198-residue polypeptide: Large ribosomal subunit protein eL18 (198 aa).

The disordered stretch occupies residues 157 to 198 (RHFGASGVPGSHSKPYATNRGKETKRGRRTGRSYKRKAFRHV). Positions 179–198 (ETKRGRRTGRSYKRKAFRHV) are enriched in basic residues.

This sequence belongs to the eukaryotic ribosomal protein eL18 family.

Its subcellular location is the cytoplasm. In Leishmania major, this protein is Large ribosomal subunit protein eL18 (RPL18-A).